The chain runs to 436 residues: UPF0597 protein YhaM (436 aa).

This sequence belongs to the UPF0597 family.

In Shigella sonnei (strain Ss046), this protein is UPF0597 protein YhaM.